Reading from the N-terminus, the 727-residue chain is Malate synthase G (727 aa).

Acetyl-CoA contacts are provided by residues V117, 124-125 (RY), S275, and R312. Residue R339 is the Proton acceptor of the active site. Glyoxylate-binding positions include R339, E431, and 456 to 459 (GFLD). Positions 431 and 459 each coordinate Mg(2+). Acetyl-CoA is bound at residue P540. C616 bears the Cysteine sulfenic acid (-SOH) mark. Residue D630 is the Proton donor of the active site.

It belongs to the malate synthase family. GlcB subfamily. Monomer. It depends on Mg(2+) as a cofactor.

It localises to the cytoplasm. The catalysed reaction is glyoxylate + acetyl-CoA + H2O = (S)-malate + CoA + H(+). Its pathway is carbohydrate metabolism; glyoxylate cycle; (S)-malate from isocitrate: step 2/2. Functionally, involved in the glycolate utilization. Catalyzes the condensation and subsequent hydrolysis of acetyl-coenzyme A (acetyl-CoA) and glyoxylate to form malate and CoA. The protein is Malate synthase G of Halalkalibacterium halodurans (strain ATCC BAA-125 / DSM 18197 / FERM 7344 / JCM 9153 / C-125) (Bacillus halodurans).